A 295-amino-acid chain; its full sequence is Bifunctional protein FolD (295 aa).

NADP(+) contacts are provided by residues 166–168 (GRS), serine 195, and isoleucine 236.

Belongs to the tetrahydrofolate dehydrogenase/cyclohydrolase family. As to quaternary structure, homodimer.

The catalysed reaction is (6R)-5,10-methylene-5,6,7,8-tetrahydrofolate + NADP(+) = (6R)-5,10-methenyltetrahydrofolate + NADPH. It carries out the reaction (6R)-5,10-methenyltetrahydrofolate + H2O = (6R)-10-formyltetrahydrofolate + H(+). The protein operates within one-carbon metabolism; tetrahydrofolate interconversion. Its function is as follows. Catalyzes the oxidation of 5,10-methylenetetrahydrofolate to 5,10-methenyltetrahydrofolate and then the hydrolysis of 5,10-methenyltetrahydrofolate to 10-formyltetrahydrofolate. This is Bifunctional protein FolD from Prosthecochloris aestuarii (strain DSM 271 / SK 413).